We begin with the raw amino-acid sequence, 169 residues long: Photosystem I assembly protein Ycf3 (169 aa).

TPR repeat units follow at residues 35-68, 72-105, and 120-153; these read AFTYYRDGMSAQSEGEYAEASQNYYEAMRLEIDP, SYILHNIGLIHTSNGEHARALEYYFQALERNPSL, and GEQAIQQGDFETSEAWFGKAADHWKQAVLLAPGN.

The protein belongs to the Ycf3 family.

It is found in the plastid. Its subcellular location is the chloroplast thylakoid membrane. Essential for the assembly of the photosystem I (PSI) complex. May act as a chaperone-like factor to guide the assembly of the PSI subunits. This chain is Photosystem I assembly protein Ycf3, found in Huperzia lucidula (Shining clubmoss).